The primary structure comprises 346 residues: MEDGSVFAGRLIGAEKIAVGEVVFTTSVVGYPQTLTDPSYKGQIITFTMPLIGNYGVSEDQLESDGIKAEGVVLFEATFPSHYKSVMSLEEWLASSGVPGVARVDTRALVQMLREHGVMMGAIGPEDPAVLMEALRKSPHYEDVVYVDMVSVKEPVLLGEGRLCIGVVDCGVKRSIVREFLKRGVRVKLVPCRRTELAFDCDALFISNGPGNPKLLDFLSAKVSEYVEYKKPLMGICLGHQVIAMALGAGIYKLKFGHRASNKPVRDIRFTGRTYITTHNHGYAVDPRGTDLKVWAVQPDDGTVEGLYHERLPILTTQWHPEASPGPQDTRWVFDKFLKLVERHGH.

The segment at 1 to 160 (MEDGSVFAGR…SVKEPVLLGE (160 aa)) is CPSase. Residues serine 39, glycine 209, and glycine 211 each contribute to the L-glutamine site. Positions 164–346 (CIGVVDCGVK…FLKLVERHGH (183 aa)) constitute a Glutamine amidotransferase type-1 domain. Cysteine 237 functions as the Nucleophile in the catalytic mechanism. The L-glutamine site is built by leucine 238, glutamine 241, asparagine 280, glycine 282, and tyrosine 283. Active-site residues include histidine 320 and glutamate 322.

Belongs to the CarA family. In terms of assembly, composed of two chains; the small (or glutamine) chain promotes the hydrolysis of glutamine to ammonia, which is used by the large (or ammonia) chain to synthesize carbamoyl phosphate. Tetramer of heterodimers (alpha,beta)4.

It carries out the reaction hydrogencarbonate + L-glutamine + 2 ATP + H2O = carbamoyl phosphate + L-glutamate + 2 ADP + phosphate + 2 H(+). The catalysed reaction is L-glutamine + H2O = L-glutamate + NH4(+). It functions in the pathway amino-acid biosynthesis; L-arginine biosynthesis; carbamoyl phosphate from bicarbonate: step 1/1. Its pathway is pyrimidine metabolism; UMP biosynthesis via de novo pathway; (S)-dihydroorotate from bicarbonate: step 1/3. Its function is as follows. Small subunit of the glutamine-dependent carbamoyl phosphate synthetase (CPSase). CPSase catalyzes the formation of carbamoyl phosphate from the ammonia moiety of glutamine, carbonate, and phosphate donated by ATP, constituting the first step of 2 biosynthetic pathways, one leading to arginine and/or urea and the other to pyrimidine nucleotides. The small subunit (glutamine amidotransferase) binds and cleaves glutamine to supply the large subunit with the substrate ammonia. This Pyrobaculum aerophilum (strain ATCC 51768 / DSM 7523 / JCM 9630 / CIP 104966 / NBRC 100827 / IM2) protein is Carbamoyl phosphate synthase small chain.